A 466-amino-acid polypeptide reads, in one-letter code: Coagulation factor VII (466 aa).

The first 20 residues, 1–20 (MVSQALRLLCLLLGLQGCLA), serve as a signal peptide directing secretion. The propeptide occupies 21 to 60 (AGGVAEASGGETRDXXWKPGPHRVFITQEEAHGVLHRRRR). The Gla domain occupies 61-105 (ANAFLEELRPGSLERECKEEQCSFEEAREIFKDLERTKLFWISYS). 4-carboxyglutamate is present on residues Glu66, Glu67, Glu74, Glu76, Glu79, Glu80, Glu85, Glu86, Glu89, and Glu95. Cys77 and Cys82 are oxidised to a cystine. An EGF-like 1; calcium-binding domain is found at 106-142 (DGDQCASSPCQNGGSCKDQLQSYICFCLPAFEGRNCE). 10 disulfide bridges follow: Cys110-Cys121, Cys115-Cys130, Cys132-Cys141, Cys151-Cys162, Cys158-Cys172, Cys174-Cys187, Cys195-Cys322, Cys219-Cys224, Cys238-Cys254, and Cys370-Cys389. O-linked (Glc...) serine; alternate glycosylation occurs at Ser112. Ser112 is a glycosylation site (O-linked (Xyl...) serine; alternate). O-linked (Fuc) serine glycosylation is present at Ser120. (3R)-3-hydroxyaspartate is present on Asp123. Residues 147-188 (DQLICVNENGGCEQYCSDHTGTKRSCRCHEGYSLLADGVSCT) form the EGF-like 2 domain. N-linked (GlcNAc...) asparagine glycosylation is present at Asn205. The 240-residue stretch at 213 to 452 (IVGGKVCPKG…YIEWLQKLMR (240 aa)) folds into the Peptidase S1 domain. Residues His253 and Asp302 each act as charge relay system in the active site. Asn382 is a glycosylation site (N-linked (GlcNAc...) asparagine). Residue Asp398 coordinates substrate. Cysteines 400 and 428 form a disulfide. The active-site Charge relay system is the Ser404.

This sequence belongs to the peptidase S1 family. In terms of assembly, heterodimer of a light chain and a heavy chain linked by a disulfide bond. Post-translationally, the vitamin K-dependent, enzymatic carboxylation of some glutamate residues allows the modified protein to bind calcium. The iron and 2-oxoglutarate dependent 3-hydroxylation of aspartate and asparagine is (R) stereospecific within EGF domains. In terms of processing, O-glycosylated. O-fucosylated by POFUT1 on a conserved serine or threonine residue found in the consensus sequence C2-X(4,5)-[S/T]-C3 of EGF domains, where C2 and C3 are the second and third conserved cysteines. Post-translationally, can be either O-glucosylated or O-xylosylated at Ser-112 by POGLUT1.

Its subcellular location is the secreted. It catalyses the reaction Selective cleavage of Arg-|-Ile bond in factor X to form factor Xa.. Initiates the extrinsic pathway of blood coagulation. Serine protease that circulates in the blood in a zymogen form. Factor VII is converted to factor VIIa by factor Xa, factor XIIa, factor IXa, or thrombin by minor proteolysis. In the presence of tissue factor and calcium ions, factor VIIa then converts factor X to factor Xa by limited proteolysis. Factor VIIa also converts factor IX to factor IXa in the presence of tissue factor and calcium. The sequence is that of Coagulation factor VII (F7) from Pan troglodytes (Chimpanzee).